The sequence spans 365 residues: MEKTKVVVAMSGGVDSSVTAALLLEQGFEVIGITMQIWNPGEEAESKGERTCCSLTAIDDARRVADKLGISHYVLNFRSIFEEKVIDYFTSEYLRGRTPNPCIACNRYVKFEALLDRALSIGAEYIATGHYARLGYSGEYGRYTVRRPVDRRKDQTYVLYGMTQRQIARTMMPLGNYTKGQVRKIAEDFGLPVAGKAESQEICFILDDDYRRFLREKAAGIKPGPFLNMKGEVIGRHNGIPFYTVGQRRGLGLAAGERLYVVKIDPENNAITLGPEEAVWGRSLIAADVNLILYESLEEPLEVEAQVRYNARTSPATLVPLPEGRVGVHFHTPQRSITPGQAVVFYRGDYLIGGATIESTGDFFR.

ATP is bound by residues 9-16 (AMSGGVDS) and Met35. Cys105 functions as the Nucleophile in the catalytic mechanism. Cys105 and Cys203 are disulfide-bonded. Gly129 lines the ATP pocket. The interaction with tRNA stretch occupies residues 153–155 (KDQ). Catalysis depends on Cys203, which acts as the Cysteine persulfide intermediate. An interaction with tRNA region spans residues 308 to 309 (RY).

The protein belongs to the MnmA/TRMU family.

It is found in the cytoplasm. It catalyses the reaction S-sulfanyl-L-cysteinyl-[protein] + uridine(34) in tRNA + AH2 + ATP = 2-thiouridine(34) in tRNA + L-cysteinyl-[protein] + A + AMP + diphosphate + H(+). Catalyzes the 2-thiolation of uridine at the wobble position (U34) of tRNA, leading to the formation of s(2)U34. This is tRNA-specific 2-thiouridylase MnmA from Pelotomaculum thermopropionicum (strain DSM 13744 / JCM 10971 / SI).